Here is a 356-residue protein sequence, read N- to C-terminus: NADH dehydrogenase (ubiquinone) complex I, assembly factor 6 homolog (356 aa).

The N-terminal 41 residues, 1–41 (MIRNSGRILFNSLKNSNVKLINRNVIINSNIRLFSTSTNNT), are a transit peptide targeting the mitochondrion.

It belongs to the NDUFAF6 family.

It is found in the mitochondrion inner membrane. Functionally, involved in the assembly of mitochondrial NADH:ubiquinone oxidoreductase complex (complex I) at early stages. The chain is NADH dehydrogenase (ubiquinone) complex I, assembly factor 6 homolog from Dictyostelium discoideum (Social amoeba).